Here is a 449-residue protein sequence, read N- to C-terminus: Exodeoxyribonuclease 7 large subunit (449 aa).

It belongs to the XseA family. As to quaternary structure, heterooligomer composed of large and small subunits.

The protein resides in the cytoplasm. It carries out the reaction Exonucleolytic cleavage in either 5'- to 3'- or 3'- to 5'-direction to yield nucleoside 5'-phosphates.. In terms of biological role, bidirectionally degrades single-stranded DNA into large acid-insoluble oligonucleotides, which are then degraded further into small acid-soluble oligonucleotides. This chain is Exodeoxyribonuclease 7 large subunit, found in Salmonella newport (strain SL254).